A 113-amino-acid polypeptide reads, in one-letter code: Putative membrane protein insertion efficiency factor (113 aa).

This sequence belongs to the UPF0161 family.

Its subcellular location is the cell inner membrane. In terms of biological role, could be involved in insertion of integral membrane proteins into the membrane. This is Putative membrane protein insertion efficiency factor from Campylobacter curvus (strain 525.92).